Consider the following 198-residue polypeptide: Large ribosomal subunit protein bL25 (198 aa).

It belongs to the bacterial ribosomal protein bL25 family. CTC subfamily. In terms of assembly, part of the 50S ribosomal subunit; part of the 5S rRNA/L5/L18/L25 subcomplex. Contacts the 5S rRNA. Binds to the 5S rRNA independently of L5 and L18.

In terms of biological role, this is one of the proteins that binds to the 5S RNA in the ribosome where it forms part of the central protuberance. The polypeptide is Large ribosomal subunit protein bL25 (Streptomyces coelicolor (strain ATCC BAA-471 / A3(2) / M145)).